The following is a 236-amino-acid chain: Ubiquinone biosynthesis O-methyltransferase (236 aa).

4 residues coordinate S-adenosyl-L-methionine: Arg-39, Gly-59, Asp-80, and Met-124.

The protein belongs to the methyltransferase superfamily. UbiG/COQ3 family.

It catalyses the reaction a 3-demethylubiquinol + S-adenosyl-L-methionine = a ubiquinol + S-adenosyl-L-homocysteine + H(+). The catalysed reaction is a 3-(all-trans-polyprenyl)benzene-1,2-diol + S-adenosyl-L-methionine = a 2-methoxy-6-(all-trans-polyprenyl)phenol + S-adenosyl-L-homocysteine + H(+). It functions in the pathway cofactor biosynthesis; ubiquinone biosynthesis. O-methyltransferase that catalyzes the 2 O-methylation steps in the ubiquinone biosynthetic pathway. The chain is Ubiquinone biosynthesis O-methyltransferase from Shewanella sp. (strain MR-7).